We begin with the raw amino-acid sequence, 236 residues long: Phosphoribosylaminoimidazole-succinocarboxamide synthase (236 aa).

The protein belongs to the SAICAR synthetase family.

It catalyses the reaction 5-amino-1-(5-phospho-D-ribosyl)imidazole-4-carboxylate + L-aspartate + ATP = (2S)-2-[5-amino-1-(5-phospho-beta-D-ribosyl)imidazole-4-carboxamido]succinate + ADP + phosphate + 2 H(+). The protein operates within purine metabolism; IMP biosynthesis via de novo pathway; 5-amino-1-(5-phospho-D-ribosyl)imidazole-4-carboxamide from 5-amino-1-(5-phospho-D-ribosyl)imidazole-4-carboxylate: step 1/2. The protein is Phosphoribosylaminoimidazole-succinocarboxamide synthase of Chlorobium limicola (strain DSM 245 / NBRC 103803 / 6330).